Consider the following 142-residue polypeptide: MQFKNILVVCIGNICRSPMAEYLLKQNYPQLTIHSAGISGMIGYSADEKAQLCMERIGIDMSPHIAKKLNAELLKQADLILVMSQNQQKHIEQTWPFAKGKTFRLGHWQGKNIPDPYQHDQAFFDETSLLIQTCVADWTKHI.

Cys10 acts as the Nucleophile in catalysis. Arg16 is an active-site residue. Asp115 serves as the catalytic Proton donor.

The protein belongs to the low molecular weight phosphotyrosine protein phosphatase family.

It carries out the reaction O-phospho-L-tyrosyl-[protein] + H2O = L-tyrosyl-[protein] + phosphate. Its pathway is glycan metabolism; exopolysaccharide biosynthesis. Inhibited by ammonium molybdate, sodium orthovanadate, N-ethylmaleimide and iodoacetic acid. Dephosphorylates ptk. May be involved in the production and the transport of exopolysaccharides. The protein is Low molecular weight protein-tyrosine-phosphatase Ptp (ptp) of Acinetobacter johnsonii.